The chain runs to 501 residues: Cytochrome P450 90A3 (501 aa).

Residues 2-22 (AAAALLLLAAAAAIVVVAMVL) traverse the membrane as a helical segment. Cys-446 is a binding site for heme.

It belongs to the cytochrome P450 family. Heme serves as cofactor. As to expression, highly expressed in shoot apex and inflorenscence. Expressed in roots, stems, leaf blades and leaf sheaths.

Its subcellular location is the membrane. It functions in the pathway plant hormone biosynthesis; brassinosteroid biosynthesis. Its function is as follows. Catalyzes the C23-alpha-hydroxylation step in brassinosteroid biosynthesis. Converts 6-deoxocathasterone (6-deoxoCT) to 6-deoxoteasterone (6-deoxoTE) in the late C6-oxidation pathway and cathasterone (CT) to teasterone (TE) in the early C6-oxidation pathway of brassinolide (BL) biosynthesis. The sequence is that of Cytochrome P450 90A3 from Oryza sativa subsp. japonica (Rice).